Here is an 89-residue protein sequence, read N- to C-terminus: Small ribosomal subunit protein uS14 (89 aa).

This sequence belongs to the universal ribosomal protein uS14 family. As to quaternary structure, part of the 30S ribosomal subunit. Contacts proteins S3 and S10.

Functionally, binds 16S rRNA, required for the assembly of 30S particles and may also be responsible for determining the conformation of the 16S rRNA at the A site. In Chlorobium phaeobacteroides (strain BS1), this protein is Small ribosomal subunit protein uS14.